The primary structure comprises 169 residues: uncharacterized protein (169 aa).

This is an uncharacterized protein from Methanocaldococcus jannaschii (strain ATCC 43067 / DSM 2661 / JAL-1 / JCM 10045 / NBRC 100440) (Methanococcus jannaschii).